We begin with the raw amino-acid sequence, 348 residues long: 3-isopropylmalate dehydrogenase (348 aa).

76-87 (GPKWTDPNNRPE) serves as a coordination point for NAD(+). Residues Arg-94, Arg-104, Arg-132, and Asp-217 each contribute to the substrate site. The Mg(2+) site is built by Asp-217, Asp-241, and Asp-245. 275–287 (GSAPDIAGKNVAN) serves as a coordination point for NAD(+).

The protein belongs to the isocitrate and isopropylmalate dehydrogenases family. LeuB type 1 subfamily. In terms of assembly, homodimer. Mg(2+) is required as a cofactor. It depends on Mn(2+) as a cofactor.

The protein resides in the cytoplasm. The enzyme catalyses (2R,3S)-3-isopropylmalate + NAD(+) = 4-methyl-2-oxopentanoate + CO2 + NADH. The protein operates within amino-acid biosynthesis; L-leucine biosynthesis; L-leucine from 3-methyl-2-oxobutanoate: step 3/4. Its function is as follows. Catalyzes the oxidation of 3-carboxy-2-hydroxy-4-methylpentanoate (3-isopropylmalate) to 3-carboxy-4-methyl-2-oxopentanoate. The product decarboxylates to 4-methyl-2 oxopentanoate. The polypeptide is 3-isopropylmalate dehydrogenase (Staphylococcus aureus (strain MW2)).